The sequence spans 642 residues: MPVIRFYDGSQQVYEHSVSLIEIIKNKKPSIMKSLIAISVNNHFSNLNTFIREDAFIEFVDQKNYKALNIIRYSCAQLLSYAIKNIWPLAQIATSNIIEDGFYCDIDFKRSISEKDLILLENQMKTLVKREYNILNKLISYSEAREIFQKCFEKYKVSLIDENIHCNSKVSLYYHENYADIDIGLQVFNIKFCKYFKLQKIGGVYWKKNKNNKMLQRIYGTAWTNKQELDKHLDYLNELEKRDHRKIGKFLQLYHMQEESPGMIFWHNKGWIIFNELQNFVRVKLKEYKYEEVKTPLLIDKLIWKQSGHWDNYKNAIFTTLSEHREYCIKPMNCPGHVQIFNSRLKSYRDLPIRMAEFGSCHRNEPSGSLHGLMRVRNFTQDDAHIFCTREQVRSEINDCIKMIYDLYSTFHFKKILVKLSTRPEKRIGTDSLWNESEKDLSDMLIENHLSFEYQSGEGAFYGPKIEFILQDSLDRNWQCGTIQLDFYLPLRLSSFYINEKNEKKVPVIIHRAILGSIERFIGILIEECSGNLPTWLSPVQVVIISITDISSGYVKELFKKFSDVNIRIECDLRNEKIGFKIREHTLRRIPYILICGEKESSSKKISVRNRQGHNFGMIDVDFFIKKLQKEIITRNFYQMEE.

The TGS domain occupies 1–61 (MPVIRFYDGS…REDAFIEFVD (61 aa)). Residues 243–534 (DHRKIGKFLQ…LIEECSGNLP (292 aa)) form a catalytic region. Residues C334, H385, and H511 each contribute to the Zn(2+) site.

This sequence belongs to the class-II aminoacyl-tRNA synthetase family. As to quaternary structure, homodimer. Zn(2+) is required as a cofactor.

Its subcellular location is the cytoplasm. It catalyses the reaction tRNA(Thr) + L-threonine + ATP = L-threonyl-tRNA(Thr) + AMP + diphosphate + H(+). Functionally, catalyzes the attachment of threonine to tRNA(Thr) in a two-step reaction: L-threonine is first activated by ATP to form Thr-AMP and then transferred to the acceptor end of tRNA(Thr). Also edits incorrectly charged L-seryl-tRNA(Thr). This is Threonine--tRNA ligase from Buchnera aphidicola subsp. Acyrthosiphon pisum (strain Tuc7).